A 380-amino-acid polypeptide reads, in one-letter code: Histidinol-phosphate aminotransferase (380 aa).

N6-(pyridoxal phosphate)lysine is present on Lys232.

It belongs to the class-II pyridoxal-phosphate-dependent aminotransferase family. Histidinol-phosphate aminotransferase subfamily. As to quaternary structure, homodimer. Pyridoxal 5'-phosphate is required as a cofactor.

The enzyme catalyses L-histidinol phosphate + 2-oxoglutarate = 3-(imidazol-4-yl)-2-oxopropyl phosphate + L-glutamate. The protein operates within amino-acid biosynthesis; L-histidine biosynthesis; L-histidine from 5-phospho-alpha-D-ribose 1-diphosphate: step 7/9. This is Histidinol-phosphate aminotransferase from Mycobacterium bovis (strain BCG / Pasteur 1173P2).